Reading from the N-terminus, the 577-residue chain is Proline--tRNA ligase (577 aa).

The protein belongs to the class-II aminoacyl-tRNA synthetase family. ProS type 1 subfamily. Homodimer.

The protein localises to the cytoplasm. The enzyme catalyses tRNA(Pro) + L-proline + ATP = L-prolyl-tRNA(Pro) + AMP + diphosphate. Functionally, catalyzes the attachment of proline to tRNA(Pro) in a two-step reaction: proline is first activated by ATP to form Pro-AMP and then transferred to the acceptor end of tRNA(Pro). As ProRS can inadvertently accommodate and process non-cognate amino acids such as alanine and cysteine, to avoid such errors it has two additional distinct editing activities against alanine. One activity is designated as 'pretransfer' editing and involves the tRNA(Pro)-independent hydrolysis of activated Ala-AMP. The other activity is designated 'posttransfer' editing and involves deacylation of mischarged Ala-tRNA(Pro). The misacylated Cys-tRNA(Pro) is not edited by ProRS. The polypeptide is Proline--tRNA ligase (Chlamydia felis (strain Fe/C-56) (Chlamydophila felis)).